The primary structure comprises 89 residues: Large ribosomal subunit protein bL27 (89 aa).

The segment at 1–26 (MAHKKAGGSSKNGRDSNAQRRGVKRF) is disordered.

The protein belongs to the bacterial ribosomal protein bL27 family.

In Maridesulfovibrio salexigens (strain ATCC 14822 / DSM 2638 / NCIMB 8403 / VKM B-1763) (Desulfovibrio salexigens), this protein is Large ribosomal subunit protein bL27.